Consider the following 549-residue polypeptide: Threonine--tRNA ligase catalytic subunit (549 aa).

The tract at residues D142 to P437 is catalytic. Positions 235, 286, and 414 each coordinate Zn(2+).

It belongs to the class-II aminoacyl-tRNA synthetase family. Homodimer. Probably interacts with its editing subunit. The cofactor is Zn(2+).

The protein localises to the cytoplasm. The catalysed reaction is tRNA(Thr) + L-threonine + ATP = L-threonyl-tRNA(Thr) + AMP + diphosphate + H(+). Functionally, catalyzes the attachment of threonine to tRNA(Thr) in a two-step reaction: L-threonine is first activated by ATP to form Thr-AMP and then transferred to the acceptor end of tRNA(Thr). Also activates L-serine and transfers it to tRNA(Thr) but cannot deacylate incorrectly charged amino acid; unlike most archaea the editing function is found in a freestanding protein. The chain is Threonine--tRNA ligase catalytic subunit from Sulfolobus acidocaldarius (strain ATCC 33909 / DSM 639 / JCM 8929 / NBRC 15157 / NCIMB 11770).